A 147-amino-acid chain; its full sequence is Cyanate hydratase (147 aa).

Residues arginine 88, glutamate 91, and serine 114 contribute to the active site.

It belongs to the cyanase family.

The catalysed reaction is cyanate + hydrogencarbonate + 3 H(+) = NH4(+) + 2 CO2. Functionally, catalyzes the reaction of cyanate with bicarbonate to produce ammonia and carbon dioxide. The chain is Cyanate hydratase from Dechloromonas aromatica (strain RCB).